Consider the following 227-residue polypeptide: Ribosomal RNA small subunit methyltransferase G (227 aa).

Residues Gly-81, Leu-86, 131 to 132 (AE), and Arg-149 contribute to the S-adenosyl-L-methionine site.

The protein belongs to the methyltransferase superfamily. RNA methyltransferase RsmG family.

Its subcellular location is the cytoplasm. Specifically methylates the N7 position of guanine in position 518 of 16S rRNA. This chain is Ribosomal RNA small subunit methyltransferase G, found in Rhodococcus jostii (strain RHA1).